We begin with the raw amino-acid sequence, 526 residues long: Organic cation/carnitine transporter 4 (526 aa).

Residues 1–52 (MESPEDRNGNDVRQPLLEKIPVKKEAEGEERLCIDEMLQRYCGEFGRWQLKH) lie on the Cytoplasmic side of the membrane. Residues 53–73 (FVLTCIAWALEAFHTMVMIFA) traverse the membrane as a helical segment. At 74–123 (DQEPEWRCVGSDCRVGSLNCELDPSSWEWTAGKGSSTVSEWGLICGDKYK) the chain is on the extracellular side. Residues 124 to 144 (VGLVQALFFAGCMIGAGVFGH) traverse the membrane as a helical segment. Residues 145–153 (LSDSKLGRK) lie on the Cytoplasmic side of the membrane. The chain crosses the membrane as a helical span at residues 154–174 (GSLTVVCIINAIFGIATAFSP). Residues 175–179 (NYWTY) lie on the Extracellular side of the membrane. A helical membrane pass occupies residues 180–200 (VVLRFLTGFSTGGVGLTAFVL). 201–208 (ATEPIGPS) provides a ligand contact to ATP. Over 201–214 (ATEPIGPSKRGVAG) the chain is Cytoplasmic. A helical membrane pass occupies residues 215-235 (MSTFYFFSAGIAVLSGIAYVF). Residues 236–240 (RSWRE) are Extracellular-facing. The chain crosses the membrane as a helical span at residues 241-261 (LFIVSSLPSLLFLLIVIPFIS). The Cytoplasmic portion of the chain corresponds to 262–331 (ESPRWYLVRG…ILSPLMRMRL (70 aa)). Residues 332 to 352 (VISVAISFTVSIVYYGLSLNV) form a helical membrane-spanning segment. Over 353–360 (GNLKTNLY) the chain is Extracellular. Residues 361–381 (LNVFVNAVSEMPAFAITAVLL) form a helical membrane-spanning segment. Topologically, residues 382-390 (DKYGRKPLS) are cytoplasmic. The chain crosses the membrane as a helical span at residues 391 to 411 (IGTQWFSCVFCLVGFSVWGAG). Residues 412–418 (PWKSVRM) lie on the Extracellular side of the membrane. A helical transmembrane segment spans residues 419 to 439 (VSGVLGIFGMAGTYNLLFIYI). At 440–451 (AELFPTVVRNAA) the chain is on the cytoplasmic side. Residues 452–472 (LGCATQAAQMGAILAPFVVVL) traverse the membrane as a helical segment. Over 473 to 475 (GEE) the chain is Extracellular. A helical transmembrane segment spans residues 476-496 (LPFGVFAVCGLVGGGLAFYLP). The Cytoplasmic segment spans residues 497-526 (ETLNKPLYDTMFGMHEAESESNRERGEVIC).

Belongs to the major facilitator (TC 2.A.1) superfamily. Organic cation transporter (TC 2.A.1.19) family. Mostly expressed in siliques, and, to a lower extent, in stems, leaves, flowers and siliques. Present in pollen. In the stems of secondary inflorescences present in the phloem cells and xylem parenchyma cells.

Its subcellular location is the vacuole membrane. In terms of biological role, high affinity carnitine transporter involved in the active cellular uptake of carnitine. Also transports organic cations. This Arabidopsis thaliana (Mouse-ear cress) protein is Organic cation/carnitine transporter 4 (OCT4).